A 185-amino-acid chain; its full sequence is Elongation factor P (185 aa).

The protein belongs to the elongation factor P family.

It is found in the cytoplasm. Its pathway is protein biosynthesis; polypeptide chain elongation. In terms of biological role, involved in peptide bond synthesis. Stimulates efficient translation and peptide-bond synthesis on native or reconstituted 70S ribosomes in vitro. Probably functions indirectly by altering the affinity of the ribosome for aminoacyl-tRNA, thus increasing their reactivity as acceptors for peptidyl transferase. This is Elongation factor P from Burkholderia ambifaria (strain MC40-6).